A 307-amino-acid chain; its full sequence is Murein tetrapeptide carboxypeptidase (307 aa).

Serine 115 acts as the Nucleophile in catalysis. Residues glutamate 217 and histidine 285 each act as charge relay system in the active site.

It belongs to the peptidase S66 family. Homodimer.

The protein resides in the cytoplasm. It carries out the reaction N-acetyl-D-glucosaminyl-N-acetylmuramoyl-L-alanyl-meso-2,6-diaminoheptanedioyl-D-alanine + H2O = N-acetyl-D-glucosaminyl-N-acetylmuramoyl-L-alanyl-meso-2,6-diaminoheptanedioate + D-alanine. The protein operates within cell wall biogenesis; peptidoglycan recycling. In terms of biological role, releases the terminal D-alanine residue from the cytoplasmic disaccharide-tetrapeptide GlcNAc-MurNAc-L-Ala-gamma-D-Glu-meso-Dap-D-Ala, which is a murein turnover product. Probably also act on free tetrapetide. May be involved in murein recycling. In Pseudomonas aeruginosa (strain ATCC 15692 / DSM 22644 / CIP 104116 / JCM 14847 / LMG 12228 / 1C / PRS 101 / PAO1), this protein is Murein tetrapeptide carboxypeptidase.